The following is a 320-amino-acid chain: tRNA(Ile)-lysidine synthase (320 aa).

Position 33-38 (33-38 (SGGPDS)) interacts with ATP.

Belongs to the tRNA(Ile)-lysidine synthase family.

It is found in the cytoplasm. It catalyses the reaction cytidine(34) in tRNA(Ile2) + L-lysine + ATP = lysidine(34) in tRNA(Ile2) + AMP + diphosphate + H(+). In terms of biological role, ligates lysine onto the cytidine present at position 34 of the AUA codon-specific tRNA(Ile) that contains the anticodon CAU, in an ATP-dependent manner. Cytidine is converted to lysidine, thus changing the amino acid specificity of the tRNA from methionine to isoleucine. In Mycolicibacterium paratuberculosis (strain ATCC BAA-968 / K-10) (Mycobacterium paratuberculosis), this protein is tRNA(Ile)-lysidine synthase.